A 310-amino-acid chain; its full sequence is Protein LRATD2 (310 aa).

The tract at residues 1 to 76 (MGNQVEKLTH…PPPQPQPYDP (76 aa)) is disordered. Residues 54–64 (PDGGGLPDGGD) show a composition bias toward gly residues. Residues 65-74 (GPPPPQPQPY) are compositionally biased toward pro residues. The 96-residue stretch at 122-217 (VEFVSQAQYP…CRYGKREFKI (96 aa)) folds into the LRAT domain. Residues 274–310 (HPAEPEEGDSNVARTTPPPGRPPAPSSEEEDGEAVAH) form a disordered region. Positions 289–298 (TPPPGRPPAP) are enriched in pro residues. A compositionally biased stretch (acidic residues) spans 300 to 310 (SEEEDGEAVAH).

The protein belongs to the LRATD family. Expressed in esophageal squamous cell carcinomas.

The sequence is that of Protein LRATD2 from Homo sapiens (Human).